The primary structure comprises 38 residues: Photosystem II reaction center protein L (38 aa).

Residues 17 to 37 (SLYWGLLLIFVLAVLFSNYFF) form a helical membrane-spanning segment.

It belongs to the PsbL family. As to quaternary structure, PSII is composed of 1 copy each of membrane proteins PsbA, PsbB, PsbC, PsbD, PsbE, PsbF, PsbH, PsbI, PsbJ, PsbK, PsbL, PsbM, PsbT, PsbX, PsbY, PsbZ, Psb30/Ycf12, at least 3 peripheral proteins of the oxygen-evolving complex and a large number of cofactors. It forms dimeric complexes.

It is found in the plastid. The protein resides in the chloroplast thylakoid membrane. One of the components of the core complex of photosystem II (PSII). PSII is a light-driven water:plastoquinone oxidoreductase that uses light energy to abstract electrons from H(2)O, generating O(2) and a proton gradient subsequently used for ATP formation. It consists of a core antenna complex that captures photons, and an electron transfer chain that converts photonic excitation into a charge separation. This subunit is found at the monomer-monomer interface and is required for correct PSII assembly and/or dimerization. The polypeptide is Photosystem II reaction center protein L (Gnetum gnemon (Spanish joint-fir)).